We begin with the raw amino-acid sequence, 78 residues long: Small ribosomal subunit protein bS18 (78 aa).

The protein belongs to the bacterial ribosomal protein bS18 family. As to quaternary structure, part of the 30S ribosomal subunit. Forms a tight heterodimer with protein bS6.

Its function is as follows. Binds as a heterodimer with protein bS6 to the central domain of the 16S rRNA, where it helps stabilize the platform of the 30S subunit. The protein is Small ribosomal subunit protein bS18 of Levilactobacillus brevis (strain ATCC 367 / BCRC 12310 / CIP 105137 / JCM 1170 / LMG 11437 / NCIMB 947 / NCTC 947) (Lactobacillus brevis).